Reading from the N-terminus, the 616-residue chain is UvrABC system protein C (616 aa).

Residues 21–100 (TCPGVYQFKN…IKDLKPRYNI (80 aa)) enclose the GIY-YIG domain. The UVR domain maps to 214 to 249 (GALIRTLSAEMHRYADELRFEEAAELKIQIEGLRKY).

Belongs to the UvrC family. In terms of assembly, interacts with UvrB in an incision complex.

The protein localises to the cytoplasm. Functionally, the UvrABC repair system catalyzes the recognition and processing of DNA lesions. UvrC both incises the 5' and 3' sides of the lesion. The N-terminal half is responsible for the 3' incision and the C-terminal half is responsible for the 5' incision. The sequence is that of UvrABC system protein C from Prosthecochloris aestuarii (strain DSM 271 / SK 413).